The following is a 1378-amino-acid chain: DNA-directed RNA polymerase subunit beta (1378 aa).

Belongs to the RNA polymerase beta chain family. As to quaternary structure, the RNAP catalytic core consists of 2 alpha, 1 beta, 1 beta' and 1 omega subunit. When a sigma factor is associated with the core the holoenzyme is formed, which can initiate transcription.

The enzyme catalyses RNA(n) + a ribonucleoside 5'-triphosphate = RNA(n+1) + diphosphate. In terms of biological role, DNA-dependent RNA polymerase catalyzes the transcription of DNA into RNA using the four ribonucleoside triphosphates as substrates. This Campylobacter jejuni subsp. jejuni serotype O:23/36 (strain 81-176) protein is DNA-directed RNA polymerase subunit beta.